We begin with the raw amino-acid sequence, 336 residues long: Octanoyltransferase (336 aa).

Polar residues predominate over residues 1–16 (MPKSALMSSSFQTSVS). Disordered stretches follow at residues 1 to 22 (MPKS…PLPV) and 48 to 88 (QGKG…GGGR). The interval 1-92 (MPKSALMSSS…AAGGGRTIRD (92 aa)) is unknown. The tract at residues 93-336 (VKEAAFDVLD…GQEALSVASP (244 aa)) is lipB domain. The BPL/LPL catalytic domain occupies 124–318 (VGGRPTLLLV…AFALTFADYD (195 aa)). Substrate contacts are provided by residues 170 to 177 (RGGDVTYH), 244 to 246 (SIG), and 257 to 259 (GIG). The active-site Acyl-thioester intermediate is C275.

It in the C-terminal section; belongs to the LipB family.

The protein localises to the cytoplasm. The catalysed reaction is octanoyl-[ACP] + L-lysyl-[protein] = N(6)-octanoyl-L-lysyl-[protein] + holo-[ACP] + H(+). It participates in protein modification; protein lipoylation via endogenous pathway; protein N(6)-(lipoyl)lysine from octanoyl-[acyl-carrier-protein]: step 1/2. Catalyzes the transfer of endogenously produced octanoic acid from octanoyl-acyl-carrier-protein onto the lipoyl domains of lipoate-dependent enzymes. Lipoyl-ACP can also act as a substrate although octanoyl-ACP is likely to be the physiological substrate. The protein is Octanoyltransferase of Deinococcus radiodurans (strain ATCC 13939 / DSM 20539 / JCM 16871 / CCUG 27074 / LMG 4051 / NBRC 15346 / NCIMB 9279 / VKM B-1422 / R1).